The following is a 379-amino-acid chain: Tryptophan 2,3-dioxygenase (379 aa).

Residues 57 to 61 (FIITH) and R128 contribute to the substrate site. Residue H312 participates in heme binding. A substrate-binding site is contributed by T327.

The protein belongs to the tryptophan 2,3-dioxygenase family. Homotetramer. Dimer of dimers. Heme is required as a cofactor.

The catalysed reaction is L-tryptophan + O2 = N-formyl-L-kynurenine. The protein operates within amino-acid degradation; L-tryptophan degradation via kynurenine pathway; L-kynurenine from L-tryptophan: step 1/2. It participates in pigment biosynthesis; ommochrome biosynthesis. In terms of biological role, heme-dependent dioxygenase that catalyzes the oxidative cleavage of the L-tryptophan (L-Trp) pyrrole ring and converts L-tryptophan to N-formyl-L-kynurenine. Catalyzes the oxidative cleavage of the indole moiety. The sequence is that of Tryptophan 2,3-dioxygenase from Drosophila erecta (Fruit fly).